The chain runs to 132 residues: ATP synthase epsilon chain, chloroplastic (132 aa).

This sequence belongs to the ATPase epsilon chain family. As to quaternary structure, F-type ATPases have 2 components, CF(1) - the catalytic core - and CF(0) - the membrane proton channel. CF(1) has five subunits: alpha(3), beta(3), gamma(1), delta(1), epsilon(1). CF(0) has three main subunits: a, b and c.

It localises to the plastid. Its subcellular location is the chloroplast thylakoid membrane. In terms of biological role, produces ATP from ADP in the presence of a proton gradient across the membrane. This is ATP synthase epsilon chain, chloroplastic from Calycanthus floridus var. glaucus (Eastern sweetshrub).